Here is a 586-residue protein sequence, read N- to C-terminus: Phosphatase and actin regulator 1 (586 aa).

Residues 62 to 83 (RRRSKFATLGRLFKPWKWRKKK) carry the Nuclear localization signal motif. The RPEL 1 repeat unit spans residues 92-117 (AALERKISMRQSREELIKRGVLKEMY). Residues 373-414 (ECEDDKENVPHETSYDDSSCLYSRDEEEDDDDDDDDEDDDSS) form a disordered region. The span at 397-413 (DEEEDDDDDDDDEDDDS) shows a compositional bias: acidic residues. RPEL repeat units follow at residues 428 to 453 (DSLAIKLSNRPSKRELEEKNILPMQT), 466 to 491 (TKLTRRLSQRPTAEELEQRNILKPRN), and 504 to 529 (RRLTRKLSQRPTVEELREKKILISFS).

Belongs to the phosphatase and actin regulator family. In terms of assembly, interacts (via RPEL repeats) with ACTA1.

The protein resides in the cytoplasm. It is found in the synapse. The protein localises to the nucleus. In terms of biological role, binds actin monomers (G actin) and plays a role in the reorganization of the actin cytoskeleton and in formation of actin stress fibers. This is Phosphatase and actin regulator 1 (phactr1) from Xenopus laevis (African clawed frog).